A 476-amino-acid chain; its full sequence is Bifunctional protein HldE (476 aa).

A ribokinase region spans residues 1-318 (MAQYSAEFKQ…ENAIHARPET (318 aa)). 195-198 (NMSE) lines the ATP pocket. Residue D264 is part of the active site. Residues 344–476 (MTNGCFDILH…VIEKIKLLKD (133 aa)) form a cytidylyltransferase region.

It in the N-terminal section; belongs to the carbohydrate kinase PfkB family. This sequence in the C-terminal section; belongs to the cytidylyltransferase family. Homodimer.

The catalysed reaction is D-glycero-beta-D-manno-heptose 7-phosphate + ATP = D-glycero-beta-D-manno-heptose 1,7-bisphosphate + ADP + H(+). It carries out the reaction D-glycero-beta-D-manno-heptose 1-phosphate + ATP + H(+) = ADP-D-glycero-beta-D-manno-heptose + diphosphate. The protein operates within nucleotide-sugar biosynthesis; ADP-L-glycero-beta-D-manno-heptose biosynthesis; ADP-L-glycero-beta-D-manno-heptose from D-glycero-beta-D-manno-heptose 7-phosphate: step 1/4. It participates in nucleotide-sugar biosynthesis; ADP-L-glycero-beta-D-manno-heptose biosynthesis; ADP-L-glycero-beta-D-manno-heptose from D-glycero-beta-D-manno-heptose 7-phosphate: step 3/4. It functions in the pathway bacterial outer membrane biogenesis; LOS core biosynthesis. Its function is as follows. Catalyzes the phosphorylation of D-glycero-D-manno-heptose 7-phosphate at the C-1 position to selectively form D-glycero-beta-D-manno-heptose-1,7-bisphosphate. In terms of biological role, catalyzes the ADP transfer from ATP to D-glycero-beta-D-manno-heptose 1-phosphate, yielding ADP-D-glycero-beta-D-manno-heptose. The chain is Bifunctional protein HldE from Haemophilus influenzae (strain ATCC 51907 / DSM 11121 / KW20 / Rd).